A 98-amino-acid polypeptide reads, in one-letter code: NADH-ubiquinone oxidoreductase chain 4L (98 aa).

3 helical membrane passes run 1 to 21 (MSLV…GLLM), 29 to 49 (ALLC…LTIL), and 61 to 81 (IILL…LIMI).

The protein belongs to the complex I subunit 4L family. Core subunit of respiratory chain NADH dehydrogenase (Complex I) which is composed of 45 different subunits.

The protein localises to the mitochondrion inner membrane. It carries out the reaction a ubiquinone + NADH + 5 H(+)(in) = a ubiquinol + NAD(+) + 4 H(+)(out). In terms of biological role, core subunit of the mitochondrial membrane respiratory chain NADH dehydrogenase (Complex I) which catalyzes electron transfer from NADH through the respiratory chain, using ubiquinone as an electron acceptor. Part of the enzyme membrane arm which is embedded in the lipid bilayer and involved in proton translocation. This is NADH-ubiquinone oxidoreductase chain 4L (MT-ND4L) from Monodon monoceros (Narwhal).